Consider the following 87-residue polypeptide: Phosphoribosyl-ATP pyrophosphatase (87 aa).

Belongs to the PRA-PH family.

Its subcellular location is the cytoplasm. It catalyses the reaction 1-(5-phospho-beta-D-ribosyl)-ATP + H2O = 1-(5-phospho-beta-D-ribosyl)-5'-AMP + diphosphate + H(+). The protein operates within amino-acid biosynthesis; L-histidine biosynthesis; L-histidine from 5-phospho-alpha-D-ribose 1-diphosphate: step 2/9. The polypeptide is Phosphoribosyl-ATP pyrophosphatase (hisE) (Corynebacterium glutamicum (strain ATCC 13032 / DSM 20300 / JCM 1318 / BCRC 11384 / CCUG 27702 / LMG 3730 / NBRC 12168 / NCIMB 10025 / NRRL B-2784 / 534)).